The sequence spans 109 residues: T-cell surface glycoprotein CD1b (109 aa).

Positions Met1 to Asn18 are cleaved as a signal peptide. N-linked (GlcNAc...) asparagine glycans are attached at residues Asn38 and Asn75.

As to quaternary structure, heterodimer with B2M (beta-2-microglobulin). Interacts with saposin C. In terms of tissue distribution, expressed on cortical thymocytes, on certain T-cell leukemias, and in various other tissues.

The protein localises to the cell membrane. Its subcellular location is the endosome membrane. It is found in the lysosome membrane. Its function is as follows. Antigen-presenting protein that binds self and non-self lipid and glycolipid antigens and presents them to T-cell receptors on natural killer T-cells. The chain is T-cell surface glycoprotein CD1b (CD1B) from Oryctolagus cuniculus (Rabbit).